A 150-amino-acid polypeptide reads, in one-letter code: MAKRVSLPDVVISAPKAVFKPAKEEALACILPKYYKSMADVSIKTNSVIDKCWFCNQDLVFRPISIETFKGGEVGYFCSKICRDSLASMVKSHVALREEPKISLLPLVFYEDKEKVINTINLLRDKDGVYGSCYFKENSQIIDISLRSLL.

The protein belongs to the chordopoxvirinae VLTF-2 family. In terms of assembly, interacts with itself. Interacts with the late transcription factors VLTF-1.

Its function is as follows. Acts with RNA polymerase to initiate transcription from late gene promoters. The sequence is that of Viral late gene transcription factor 2 (VLTF2) from Homo sapiens (Human).